The sequence spans 321 residues: Histidine N-alpha-methyltransferase (321 aa).

Tyr-56 is a binding site for L-histidine. Residues Gly-86, Lys-92, Asp-113, and 141 to 142 (DF) each bind S-adenosyl-L-methionine. Residues Asn-166, Tyr-206, and 282-284 (EVS) contribute to the L-histidine site.

This sequence belongs to the methyltransferase superfamily. EgtD family. Monomer.

It carries out the reaction L-histidine + 3 S-adenosyl-L-methionine = hercynine + 3 S-adenosyl-L-homocysteine + 3 H(+). It participates in amino-acid biosynthesis; ergothioneine biosynthesis. Catalyzes the SAM-dependent triple methylation of the alpha-amino group of histidine to form hercynine, a step in the biosynthesis pathway of ergothioneine. Among all the proteinogenic amino acids, only L-histidine is a substrate. The polypeptide is Histidine N-alpha-methyltransferase (Mycolicibacterium smegmatis (strain ATCC 700084 / mc(2)155) (Mycobacterium smegmatis)).